The primary structure comprises 377 residues: uncharacterized protein (377 aa).

A helical transmembrane segment spans residues 21–43; the sequence is YFISFSALFLIAYMFVAAVPLGA.

It is found in the membrane. This is an uncharacterized protein from Treponema pallidum (strain Nichols).